The primary structure comprises 110 residues: U1-lycotoxin-Ls1hh (110 aa).

A signal peptide spans Met-1–Ala-20. A propeptide spanning residues Glu-21–Arg-44 is cleaved from the precursor. 4 disulfides stabilise this stretch: Cys-47-Cys-62, Cys-54-Cys-71, Cys-61-Cys-89, and Cys-73-Cys-87.

The protein belongs to the neurotoxin 19 (CSTX) family. 03 subfamily. As to expression, expressed by the venom gland.

The protein localises to the secreted. This Lycosa singoriensis (Wolf spider) protein is U1-lycotoxin-Ls1hh.